The sequence spans 130 residues: MSKPIRKIGSRRNERRIPKGVIHVQASFNNTIVTVTDVRGQVVSWSSAGACGFKGTKRSTPFAAQTAAENAIRTLMDQGMERAEVMISGPGPGRDTALRAIRRSGVLLSFVRDVTPMPHNGCRPPKKRRV.

This sequence belongs to the universal ribosomal protein uS11 family. Part of the 30S ribosomal subunit.

The protein resides in the plastid. Its subcellular location is the chloroplast. In Cycas taitungensis (Prince sago), this protein is Small ribosomal subunit protein uS11c.